We begin with the raw amino-acid sequence, 494 residues long: Cysteine--tRNA ligase (494 aa).

Cys-29 contacts Zn(2+). The 'HIGH' region signature appears at 31–41 (LTVSDDAHLGH). A disordered region spans residues 187 to 220 (KAGGVSPDDANTHRDDELPPLDGERGQTWASPWG). A compositionally biased stretch (basic and acidic residues) spans 196–211 (ANTHRDDELPPLDGER). Zn(2+) contacts are provided by Cys-230, His-255, and Glu-259. Positions 287–291 (KMSSS) match the 'KMSKS' region motif.

The protein belongs to the class-I aminoacyl-tRNA synthetase family. Zn(2+) serves as cofactor.

Its subcellular location is the cytoplasm. It carries out the reaction tRNA(Cys) + L-cysteine + ATP = L-cysteinyl-tRNA(Cys) + AMP + diphosphate. The polypeptide is Cysteine--tRNA ligase (Halobacterium salinarum (strain ATCC 700922 / JCM 11081 / NRC-1) (Halobacterium halobium)).